A 2238-amino-acid polypeptide reads, in one-letter code: RNA-directed RNA polymerase L (2238 aa).

An endonuclease region spans residues 26 to 284; that stretch reads ITLVTCQNDA…THHSEHPVDC (259 aa). 3 residues coordinate Mn(2+): Glu-51, Asp-89, and Glu-102. Lys-115 is an active-site residue. A RdRp catalytic domain is found at 1188 to 1387; the sequence is TDMKMCVNLG…FISTKFNKFV (200 aa). Asp-1346 contributes to the Mg(2+) binding site.

It belongs to the Bunyavirales RNA polymerase family. As to quaternary structure, homomultimer; the oligomeric structure is essential for the polymerase activity. Interacts with nucleoprotein N. Interacts with protein Z; this interaction inhibits viral transcription and replication, Z partially blocks the product exit tunnel for the releasing nascent RNA product. Requires Mn(2+) as cofactor. It depends on Mg(2+) as a cofactor.

The protein resides in the virion. It is found in the host cytoplasm. The catalysed reaction is RNA(n) + a ribonucleoside 5'-triphosphate = RNA(n+1) + diphosphate. RNA-dependent RNA polymerase, which is responsible for the replication and transcription of the viral RNA genome using antigenomic RNA as an intermediate. During transcription, synthesizes subgenomic RNAs and assures their capping by a cap-snatching mechanism, which involves the endonuclease activity cleaving the host capped pre-mRNAs. These short capped RNAs are then used as primers for viral transcription. The 3'-end of subgenomic mRNAs molecules are heterogeneous and not polyadenylated. The replicase function is to direct synthesis of antigenomic and genomic RNA which are encapsidated and non capped. As a consequence of the use of the same enzyme for both transcription and replication, these mechanisms need to be well coordinated. These processes may be regulated by proteins N and Z in a dose-dependent manner. Z protein inhibits the viral polymerase L und thus the viral transcription and RNA synthesis. This Calomys callosus (Large vesper mouse) protein is RNA-directed RNA polymerase L.